The following is a 203-amino-acid chain: Outer-membrane lipoprotein LolB (203 aa).

The first 18 residues, 1–18 (MTLRSFLIFFLSSLILAG), serve as a signal peptide directing secretion. Cys-19 carries the N-palmitoyl cysteine lipid modification. Cys-19 is lipidated: S-diacylglycerol cysteine.

This sequence belongs to the LolB family. As to quaternary structure, monomer.

The protein resides in the cell outer membrane. In terms of biological role, plays a critical role in the incorporation of lipoproteins in the outer membrane after they are released by the LolA protein. The protein is Outer-membrane lipoprotein LolB of Vibrio parahaemolyticus serotype O3:K6 (strain RIMD 2210633).